The primary structure comprises 316 residues: Peroxidase 31 (316 aa).

The signal sequence occupies residues 1–19 (MASLKSLFLLFLFFFTAQS). Cystine bridges form between cysteine 30-cysteine 111, cysteine 63-cysteine 68, cysteine 117-cysteine 312, and cysteine 196-cysteine 222. The Proton acceptor role is filled by histidine 61. Ca(2+) contacts are provided by aspartate 62, glycine 67, aspartate 69, and serine 71. Proline 159 provides a ligand contact to substrate. Histidine 189 is a heme b binding site. A Ca(2+)-binding site is contributed by serine 190. N-linked (GlcNAc...) asparagine glycosylation is present at asparagine 206. Aspartate 236, threonine 239, and aspartate 244 together coordinate Ca(2+).

It belongs to the peroxidase family. Classical plant (class III) peroxidase subfamily. Heme b serves as cofactor. The cofactor is Ca(2+).

It localises to the secreted. It catalyses the reaction 2 a phenolic donor + H2O2 = 2 a phenolic radical donor + 2 H2O. Removal of H(2)O(2), oxidation of toxic reductants, biosynthesis and degradation of lignin, suberization, auxin catabolism, response to environmental stresses such as wounding, pathogen attack and oxidative stress. These functions might be dependent on each isozyme/isoform in each plant tissue. The sequence is that of Peroxidase 31 (PER31) from Arabidopsis thaliana (Mouse-ear cress).